The chain runs to 87 residues: MNKRVLLVIFFVTLLVADEVNSFSFFRKAKGFLKKIWKSKIARRLREKGMKALKNYANDVLNGPAEAPAPAAAAPEEPPVEQRRRRR.

A signal peptide spans 1 to 22 (MNKRVLLVIFFVTLLVADEVNS). Low complexity predominate over residues 64 to 75 (PAEAPAPAAAAP). The interval 64–87 (PAEAPAPAAAAPEEPPVEQRRRRR) is disordered.

Belongs to the non-disulfide-bridged peptide (NDBP) superfamily. Long chain multifunctional peptide (group 2) family. As to expression, expressed by the venom gland.

It localises to the secreted. In terms of biological role, inhibits angiotensin-converting enzyme (ACE), but does not serve as substrate for the enzyme. Potentiates bradykinin (BK) on the isolated guinea pig ileum as well as the isolated rat uterus for contraction. Also potentiates in vivo the depressor effect of BK on arterial blood pressure in the normotensive anesthetized rat. The protein is Bradykinin-potentiating peptide NDBP12 of Lychas mucronatus (Chinese swimming scorpion).